Here is a 1360-residue protein sequence, read N- to C-terminus: TRAF2 and NCK-interacting protein kinase (1360 aa).

In terms of domain architecture, Protein kinase spans 25–289 (FELVELVGNG…TEQLMKHPFI (265 aa)). ATP is bound by residues 31 to 39 (VGNGTYGQV) and Lys-54. Catalysis depends on Asp-153, which acts as the Proton acceptor. Residue Thr-187 is modified to Phosphothreonine. Disordered regions lie at residues 284–347 (MKHP…LPGE), 398–440 (QKEQ…RRRA), and 539–589 (ERSR…RPVD). Residues 288–307 (FIRDQPNERQVRIQLKDHID) are compositionally biased toward basic and acidic residues. Positions 290–1047 (RDQPNERQVR…EIRKYKKRFN (758 aa)) are mediates interaction with NEDD4. A compositionally biased stretch (acidic residues) spans 317-335 (DETEYEYSGSEEEEEENDS). Phosphoserine is present on residues Ser-324 and Ser-326. Phosphoserine occurs at positions 560 and 570. Thr-581 is modified (phosphothreonine). Phosphoserine occurs at positions 600, 608, 610, and 640. Disordered regions lie at residues 601 to 801 (QGPA…KAID), 814 to 878 (LRIE…YNVG), 908 to 927 (TSGE…AGHI), and 933 to 998 (VQQS…ESSA). Basic and acidic residues predominate over residues 652–669 (RIEKFDRSSWLRQEEDIP). Residues Ser-678, Ser-680, Ser-688, Ser-701, Ser-707, Ser-720, Ser-764, Ser-766, and Ser-769 each carry the phosphoserine modification. Residues 720–755 (SPLQRTSSGSSSSSSTPSSQPSSQGGSQPGSQAGSS) are compositionally biased toward low complexity. Basic and acidic residues-rich tracts occupy residues 775–789 (EPAK…DITR) and 814–827 (LRIE…KKVT). Over residues 834 to 847 (EESESSEEEEEDGE) the composition is skewed to acidic residues. Basic and acidic residues predominate over residues 908-917 (TSGEKKRSGH). At Ser-959 the chain carries Phosphoserine. The span at 987-996 (TDEDEEDEES) shows a compositional bias: acidic residues. Residues 1047–1334 (NSEILCAALW…KFLCERNDKV (288 aa)) enclose the CNH domain.

Belongs to the protein kinase superfamily. STE Ser/Thr protein kinase family. STE20 subfamily. In terms of assembly, interacts (via the CNH domain) with RAP2A (GTP-bound form preferentially); the interaction is direct and required for the activation of TNIK by RAP2A. Interacts with NEDD4; recruits RAP2A to NEDD4. Interacts with TRAF2 and NCK. Interacts with TCF7L2/TCF4 and CTNNB1; the interaction is direct. Interacts with TANC1. Autophosphorylated. Autophosphorylation is activated by RAP2A and induces association to the cytoskeletal fraction. Expressed ubiquitously. Highest levels observed in heart, brain and skeletal muscle. Expressed in normal colonic epithelia and colorectal cancer tissues.

The protein localises to the nucleus. Its subcellular location is the cytoplasm. The protein resides in the recycling endosome. It localises to the cytoskeleton. It catalyses the reaction L-seryl-[protein] + ATP = O-phospho-L-seryl-[protein] + ADP + H(+). It carries out the reaction L-threonyl-[protein] + ATP = O-phospho-L-threonyl-[protein] + ADP + H(+). Serine/threonine kinase that acts as an essential activator of the Wnt signaling pathway. Recruited to promoters of Wnt target genes and required to activate their expression. May act by phosphorylating TCF4/TCF7L2. Appears to act upstream of the JUN N-terminal pathway. May play a role in the response to environmental stress. Part of a signaling complex composed of NEDD4, RAP2A and TNIK which regulates neuronal dendrite extension and arborization during development. More generally, it may play a role in cytoskeletal rearrangements and regulate cell spreading. Phosphorylates SMAD1 on Thr-322. Activator of the Hippo signaling pathway which plays a pivotal role in organ size control and tumor suppression by restricting proliferation and promoting apoptosis. MAP4Ks act in parallel to and are partially redundant with STK3/MST2 and STK4/MST2 in the phosphorylation and activation of LATS1/2, and establish MAP4Ks as components of the expanded Hippo pathway. The polypeptide is TRAF2 and NCK-interacting protein kinase (Homo sapiens (Human)).